The sequence spans 355 residues: Peptide chain release factor 1 (355 aa).

An N5-methylglutamine modification is found at Gln-232. The tract at residues 282–309 (EQNASISAERKSQVGSGDRSERIRTYNY) is disordered. The span at 289–305 (AERKSQVGSGDRSERIR) shows a compositional bias: basic and acidic residues.

This sequence belongs to the prokaryotic/mitochondrial release factor family. In terms of processing, methylated by PrmC. Methylation increases the termination efficiency of RF1.

The protein resides in the cytoplasm. In terms of biological role, peptide chain release factor 1 directs the termination of translation in response to the peptide chain termination codons UAG and UAA. The sequence is that of Peptide chain release factor 1 from Desulfatibacillum aliphaticivorans.